The chain runs to 100 residues: DNA base-flipping protein (100 aa).

Belongs to the MGMT family. ATL subfamily.

Its function is as follows. Involved in DNA damage recognition. Binds DNA containing O(6)-methylguanine. Binds to the damaged base and flips the base out of the DNA duplex into an extrahelical conformation, which allows processing by repair proteins. This is DNA base-flipping protein from Vibrio parahaemolyticus serotype O3:K6 (strain AQ3810).